The chain runs to 421 residues: Gamma-glutamyl phosphate reductase (421 aa).

Belongs to the gamma-glutamyl phosphate reductase family.

Its subcellular location is the cytoplasm. It carries out the reaction L-glutamate 5-semialdehyde + phosphate + NADP(+) = L-glutamyl 5-phosphate + NADPH + H(+). It functions in the pathway amino-acid biosynthesis; L-proline biosynthesis; L-glutamate 5-semialdehyde from L-glutamate: step 2/2. Its function is as follows. Catalyzes the NADPH-dependent reduction of L-glutamate 5-phosphate into L-glutamate 5-semialdehyde and phosphate. The product spontaneously undergoes cyclization to form 1-pyrroline-5-carboxylate. This chain is Gamma-glutamyl phosphate reductase, found in Leifsonia xyli subsp. xyli (strain CTCB07).